The chain runs to 352 residues: NADH-ubiquinone oxidoreductase chain 2 (352 aa).

Helical transmembrane passes span 4 to 24 (MISI…VSAE), 26 to 46 (WFVI…ILWF), 60 to 80 (FLVQ…QAWF), 96 to 116 (LCLS…FWLP), 124 to 144 (FIQG…LLFY), 150 to 170 (FSYF…WGGL), 178 to 198 (ILAF…AFSL), 205 to 225 (LFIY…LSIF), 241 to 261 (ITLV…TGFI), 274 to 294 (GFIF…FFYL), and 330 to 350 (LVSS…PLYI).

Belongs to the complex I subunit 2 family.

The protein localises to the mitochondrion inner membrane. It catalyses the reaction a ubiquinone + NADH + 5 H(+)(in) = a ubiquinol + NAD(+) + 4 H(+)(out). Functionally, core subunit of the mitochondrial membrane respiratory chain NADH dehydrogenase (Complex I) that is believed to belong to the minimal assembly required for catalysis. Complex I functions in the transfer of electrons from NADH to the respiratory chain. The immediate electron acceptor for the enzyme is believed to be ubiquinone. This is NADH-ubiquinone oxidoreductase chain 2 (ND2) from Paracentrotus lividus (Common sea urchin).